The primary structure comprises 248 residues: 3-deoxy-manno-octulosonate cytidylyltransferase (248 aa).

It belongs to the KdsB family.

The protein resides in the cytoplasm. It catalyses the reaction 3-deoxy-alpha-D-manno-oct-2-ulosonate + CTP = CMP-3-deoxy-beta-D-manno-octulosonate + diphosphate. The protein operates within nucleotide-sugar biosynthesis; CMP-3-deoxy-D-manno-octulosonate biosynthesis; CMP-3-deoxy-D-manno-octulosonate from 3-deoxy-D-manno-octulosonate and CTP: step 1/1. It functions in the pathway bacterial outer membrane biogenesis; lipopolysaccharide biosynthesis. Functionally, activates KDO (a required 8-carbon sugar) for incorporation into bacterial lipopolysaccharide in Gram-negative bacteria. The protein is 3-deoxy-manno-octulosonate cytidylyltransferase of Klebsiella pneumoniae (strain 342).